Here is a 95-residue protein sequence, read N- to C-terminus: Large ribosomal subunit protein uL23 (95 aa).

Belongs to the universal ribosomal protein uL23 family. Part of the 50S ribosomal subunit. Contacts protein L29.

Functionally, binds to 23S rRNA. One of the proteins that surrounds the polypeptide exit tunnel on the outside of the ribosome. This is Large ribosomal subunit protein uL23 from Methanopyrus kandleri (strain AV19 / DSM 6324 / JCM 9639 / NBRC 100938).